The sequence spans 660 residues: tRNA 5-methylaminomethyl-2-thiouridine biosynthesis bifunctional protein MnmC (660 aa).

Positions 1-235 are tRNA (mnm(5)s(2)U34)-methyltransferase; that stretch reads MTITRHARID…KWEVLRGAFI (235 aa). The FAD-dependent cmnm(5)s(2)U34 oxidoreductase stretch occupies residues 266–660; sequence IGAGLAGCAT…LRGLIRGGGK (395 aa).

It in the N-terminal section; belongs to the methyltransferase superfamily. tRNA (mnm(5)s(2)U34)-methyltransferase family. The protein in the C-terminal section; belongs to the DAO family. It depends on FAD as a cofactor.

The protein localises to the cytoplasm. The enzyme catalyses 5-aminomethyl-2-thiouridine(34) in tRNA + S-adenosyl-L-methionine = 5-methylaminomethyl-2-thiouridine(34) in tRNA + S-adenosyl-L-homocysteine + H(+). Its function is as follows. Catalyzes the last two steps in the biosynthesis of 5-methylaminomethyl-2-thiouridine (mnm(5)s(2)U) at the wobble position (U34) in tRNA. Catalyzes the FAD-dependent demodification of cmnm(5)s(2)U34 to nm(5)s(2)U34, followed by the transfer of a methyl group from S-adenosyl-L-methionine to nm(5)s(2)U34, to form mnm(5)s(2)U34. The chain is tRNA 5-methylaminomethyl-2-thiouridine biosynthesis bifunctional protein MnmC from Pseudomonas syringae pv. tomato (strain ATCC BAA-871 / DC3000).